The primary structure comprises 183 residues: Endoribonuclease YbeY (183 aa).

Zn(2+) contacts are provided by His143, His147, and His153.

This sequence belongs to the endoribonuclease YbeY family. Requires Zn(2+) as cofactor.

It is found in the cytoplasm. Single strand-specific metallo-endoribonuclease involved in late-stage 70S ribosome quality control and in maturation of the 3' terminus of the 16S rRNA. This is Endoribonuclease YbeY from Rickettsia bellii (strain OSU 85-389).